A 102-amino-acid polypeptide reads, in one-letter code: Large ribosomal subunit protein uL24 (102 aa).

The protein belongs to the universal ribosomal protein uL24 family. Part of the 50S ribosomal subunit.

Its function is as follows. One of two assembly initiator proteins, it binds directly to the 5'-end of the 23S rRNA, where it nucleates assembly of the 50S subunit. In terms of biological role, one of the proteins that surrounds the polypeptide exit tunnel on the outside of the subunit. The chain is Large ribosomal subunit protein uL24 from Lysinibacillus sphaericus (strain C3-41).